We begin with the raw amino-acid sequence, 220 residues long: Iron-sulfur cluster repair protein YtfE (220 aa).

The protein belongs to the RIC family. YtfE subfamily. As to quaternary structure, homodimer.

It localises to the cytoplasm. In terms of biological role, di-iron-containing protein involved in the repair of iron-sulfur clusters damaged by oxidative and nitrosative stress conditions. This is Iron-sulfur cluster repair protein YtfE from Escherichia coli O6:K15:H31 (strain 536 / UPEC).